The primary structure comprises 282 residues: 4-diphosphocytidyl-2-C-methyl-D-erythritol kinase (282 aa).

Lysine 13 is a catalytic residue. 96 to 106 (PMGGGIGGGSS) serves as a coordination point for ATP. Aspartate 138 is a catalytic residue.

Belongs to the GHMP kinase family. IspE subfamily.

It catalyses the reaction 4-CDP-2-C-methyl-D-erythritol + ATP = 4-CDP-2-C-methyl-D-erythritol 2-phosphate + ADP + H(+). Its pathway is isoprenoid biosynthesis; isopentenyl diphosphate biosynthesis via DXP pathway; isopentenyl diphosphate from 1-deoxy-D-xylulose 5-phosphate: step 3/6. Catalyzes the phosphorylation of the position 2 hydroxy group of 4-diphosphocytidyl-2C-methyl-D-erythritol. In Pseudomonas syringae pv. syringae (strain B728a), this protein is 4-diphosphocytidyl-2-C-methyl-D-erythritol kinase.